The following is a 443-amino-acid chain: MVRRRVLLATFPAQGHINPALQFAKRLLKAGTDVTFFTSVYAWRRMANTASAAAGNPPGLDFVAFSDGYDDGLKPGGDGKRYMSEMKARGSEALRNLLLNNDDVTFVVYSHLFAWAAEVARLSHVPTALLWVEPATVLCIYHFYFNGYADEIDAGSNEIQLPRLPSLEQRSLPTFLLPATPERFRLMMKEKLETLDGEEKAKVLVNTFDALEPDALTAIDRYELIGIGPLIPSAFLDGEDPSETSYGGDLFEKSEENNCVEWLNSKPKSSVVYVSFGSVLRFPKAQMEEIGKGLLACGRPFLWMIREQKNDDGEEEEEEEELSCIGELKKMGKIVSWCSQLEVLAHPALGCFVTHCGWNSAVESLSCGIPVVAVPQWFDQTTNAKLIEDAWGTGVRVRMNEGGGVDGCEIERCVEMVMDGGDKTKLVRENAIKWKTLARQAMG.

A signal peptide spans 1 to 22 (MVRRRVLLATFPAQGHINPALQ). The active-site Proton acceptor is H16. H16 is an an anthocyanidin binding site. Residues Q340, H355, W358, N359, S360, E363, D379, and Q380 each contribute to the UDP-alpha-D-glucose site.

It belongs to the UDP-glycosyltransferase family.

It catalyses the reaction an anthocyanidin 3-O-beta-D-glucoside + UDP-alpha-D-glucose = an anthocyanidin 3,5-di-O-beta-D-glucoside + UDP + 2 H(+). It participates in pigment biosynthesis; anthocyanin biosynthesis. Catalyzes the glucosylation at the O-5 position of anthocyanidin 3-glucosides to form anthocyanidin 3,5-di-O-glucosides using UDP-glucose as sugar donor. Anthocyanidin 3,5-di-O-glucosides are molecules that are responsible for pigmentation. Also acts on anthocyanidin 3-O-(6-O-malonylglucoside). Much less active with hydroxycinnamoylglucose derivatives. No activity in the absence of the 3-O-glucoside group. The sequence is that of Anthocyanidin 3-O-glucoside 5-O-glucosyltransferase 2 (PF3R6) from Perilla frutescens (Beefsteak mint).